We begin with the raw amino-acid sequence, 826 residues long: Leucine--tRNA ligase (826 aa).

The 'HIGH' region signature appears at 41–51 (PYPSGKLHMGH). A 'KMSKS' region motif is present at residues 586–590 (KMSKS). K589 is a binding site for ATP.

It belongs to the class-I aminoacyl-tRNA synthetase family.

It is found in the cytoplasm. The enzyme catalyses tRNA(Leu) + L-leucine + ATP = L-leucyl-tRNA(Leu) + AMP + diphosphate. The polypeptide is Leucine--tRNA ligase (Natranaerobius thermophilus (strain ATCC BAA-1301 / DSM 18059 / JW/NM-WN-LF)).